We begin with the raw amino-acid sequence, 113 residues long: Putative anti-sigma factor antagonist TM_1081 (113 aa).

The 110-residue stretch at 1-110 folds into the STAS domain; that stretch reads MFPYKIVDDV…DTISEAMEEV (110 aa). Residue Ser55 is modified to Phosphoserine.

The protein belongs to the anti-sigma-factor antagonist family. Post-translationally, phosphorylated on a serine residue.

In terms of biological role, in the phosphorylated form it could act as an anti-anti-sigma factor that counteracts an anti-sigma factor and thus releases a sigma factor from inhibition. This chain is Putative anti-sigma factor antagonist TM_1081, found in Thermotoga maritima (strain ATCC 43589 / DSM 3109 / JCM 10099 / NBRC 100826 / MSB8).